The sequence spans 1156 residues: Reverse gyrase 1 (1156 aa).

The RG N-terminal-type zinc-finger motif lies at Met-1–Asn-38. 4 residues coordinate Zn(2+): Cys-10, Cys-13, Cys-28, and Cys-31. Residues Gln-86 and Ala-103–Thr-110 each bind ATP. One can recognise a Helicase ATP-binding domain in the interval Ile-90 to Pro-277. Residues Asp-184–Asp-187 carry the DEAD box motif. Positions Ile-570–Val-1156 are topoisomerase I. In terms of domain architecture, Toprim spans Thr-574–Ile-736. Glu-580 serves as a coordination point for Mg(2+). The RG C-terminal-type zinc-finger motif lies at Ile-655–Ser-682. Zn(2+)-binding residues include Cys-658, Cys-661, Cys-672, and Cys-675. A Mg(2+)-binding site is contributed by Asp-705. The region spanning Asn-752–Ser-1143 is the Topo IA-type catalytic domain. The O-(5'-phospho-DNA)-tyrosine intermediate role is filled by Tyr-895.

In the N-terminal section; belongs to the DEAD box helicase family. DDVD subfamily. The protein in the C-terminal section; belongs to the type IA topoisomerase family. As to quaternary structure, monomer. Requires Zn(2+) as cofactor. It depends on Mg(2+) as a cofactor.

It is found in the cytoplasm. The enzyme catalyses ATP + H2O = ADP + phosphate + H(+). Functionally, modifies the topological state of DNA by introducing positive supercoils in an ATP-dependent process, increasing the linking number in steps of +1. Binds to single-stranded DNA, transiently cleaves and then rejoins the ends, introducing a positive supercoil in the process. The scissile phosphodiester is attacked by the catalytic tyrosine of the enzyme, resulting in the formation of a DNA-(5'-phosphotyrosyl)-enzyme intermediate. Probably involved in rewinding DNA strands in regions of the chromosome that have opened up to allow replication, transcription, DNA repair and/or for DNA protection. This chain is Reverse gyrase 1, found in Sulfurisphaera tokodaii (strain DSM 16993 / JCM 10545 / NBRC 100140 / 7) (Sulfolobus tokodaii).